Reading from the N-terminus, the 184-residue chain is Tumor necrosis factor receptor superfamily member 17 (184 aa).

The Extracellular segment spans residues 1–54 (MLQMAGQCSQNEYFDSLLHACIPCQLRCSSNTPPLTCQRYCNASVTNSVKGTNA). A TNFR-Cys repeat occupies 7-41 (QCSQNEYFDSLLHACIPCQLRCSSNTPPLTCQRYC). Disulfide bonds link C8–C21, C24–C37, and C28–C41. The helical; Signal-anchor for type III membrane protein transmembrane segment at 55-77 (ILWTCLGLSLIISLAVFVLMFLL) threads the bilayer. Residues 78–184 (RKINSEPLKD…TEIEKSISAR (107 aa)) lie on the Cytoplasmic side of the membrane.

Associates with TRAF1, TRAF2, TRAF3, TRAF5 and TRAF6. In terms of tissue distribution, expressed in mature B-cells, but not in T-cells or monocytes.

It is found in the cell membrane. The protein localises to the endomembrane system. Functionally, receptor for TNFSF13B/BLyS/BAFF and TNFSF13/APRIL. Promotes B-cell survival and plays a role in the regulation of humoral immunity. Activates NF-kappa-B and JNK. In Homo sapiens (Human), this protein is Tumor necrosis factor receptor superfamily member 17 (TNFRSF17).